Reading from the N-terminus, the 108-residue chain is UPF0060 membrane protein Mfla_0485 (108 aa).

4 helical membrane passes run 7 to 27 (FSLF…PYLW), 33 to 53 (SVWL…LLSL), 63 to 83 (AAYG…VDGI), and 87 to 107 (TWDF…MFAP).

It belongs to the UPF0060 family.

The protein localises to the cell inner membrane. This Methylobacillus flagellatus (strain ATCC 51484 / DSM 6875 / VKM B-1610 / KT) protein is UPF0060 membrane protein Mfla_0485.